The following is a 141-amino-acid chain: NADH-quinone oxidoreductase subunit A (141 aa).

A run of 3 helical transmembrane segments spans residues 24-44, 77-97, and 106-126; these read LLAL…LLLA, VPFY…AFIA, and LGWA…VALI.

Belongs to the complex I subunit 3 family. In terms of assembly, NDH-1 is composed of 14 different subunits. Subunits NuoA, H, J, K, L, M, N constitute the membrane sector of the complex.

It localises to the cell inner membrane. The catalysed reaction is a quinone + NADH + 5 H(+)(in) = a quinol + NAD(+) + 4 H(+)(out). In terms of biological role, NDH-1 shuttles electrons from NADH, via FMN and iron-sulfur (Fe-S) centers, to quinones in the respiratory chain. The immediate electron acceptor for the enzyme in this species is believed to be ubiquinone. Couples the redox reaction to proton translocation (for every two electrons transferred, four hydrogen ions are translocated across the cytoplasmic membrane), and thus conserves the redox energy in a proton gradient. The polypeptide is NADH-quinone oxidoreductase subunit A (Syntrophotalea carbinolica (strain DSM 2380 / NBRC 103641 / GraBd1) (Pelobacter carbinolicus)).